The chain runs to 102 residues: Large ribosomal subunit protein bL21 (102 aa).

Belongs to the bacterial ribosomal protein bL21 family. As to quaternary structure, part of the 50S ribosomal subunit. Contacts protein L20.

Functionally, this protein binds to 23S rRNA in the presence of protein L20. The polypeptide is Large ribosomal subunit protein bL21 (Sorangium cellulosum (strain So ce56) (Polyangium cellulosum (strain So ce56))).